The primary structure comprises 244 residues: uncharacterized protein (244 aa).

The interval 1-127 (MSGPQGSDPR…YPGQYGPYGQ (127 aa)) is disordered. Over residues 34 to 43 (WQQQPTQEAT) the composition is skewed to polar residues. Composition is skewed to low complexity over residues 45-75 (QAPA…YAQP) and 88-127 (PGQY…PYGQ). The helical transmembrane segment at 136–156 (VAVIGGVIAVMAVLFIGAVLI) threads the bilayer.

It is found in the membrane. This is an uncharacterized protein from Mycobacterium tuberculosis (strain CDC 1551 / Oshkosh).